We begin with the raw amino-acid sequence, 184 residues long: Probable cobalt-precorrin-6B C(15)-methyltransferase (decarboxylating) (184 aa).

S-adenosyl-L-methionine is bound by residues Thr-12, 36-40, Asp-59, and Ala-87; that span reads GCGTG.

It belongs to the methyltransferase superfamily. Archaeal-type CbiT family.

The enzyme catalyses Co-precorrin-6B + S-adenosyl-L-methionine = Co-precorrin-7 + S-adenosyl-L-homocysteine + CO2. It participates in cofactor biosynthesis; adenosylcobalamin biosynthesis; cob(II)yrinate a,c-diamide from sirohydrochlorin (anaerobic route): step 8/10. In terms of biological role, catalyzes the methylation of C-15 in cobalt-precorrin-6B followed by the decarboxylation of C-12 to form cobalt-precorrin-7. The sequence is that of Probable cobalt-precorrin-6B C(15)-methyltransferase (decarboxylating) from Methanosarcina mazei (strain ATCC BAA-159 / DSM 3647 / Goe1 / Go1 / JCM 11833 / OCM 88) (Methanosarcina frisia).